A 194-amino-acid polypeptide reads, in one-letter code: PLASMODESMATA CALLOSE-BINDING PROTEIN 2 (194 aa).

A signal peptide spans 1-16 (MAPLVLYLLTLLMAGH). Cysteine 22 and cysteine 84 are oxidised to a cystine. The N-linked (GlcNAc...) asparagine glycan is linked to asparagine 85. Positions 106 to 116 (SSASGSSGSGS) are enriched in low complexity. The segment at 106–140 (SSASGSSGSGSTTVTPGKNSPKGSNSITTFPGGNS) is disordered. A compositionally biased stretch (polar residues) spans 117-140 (TTVTPGKNSPKGSNSITTFPGGNS). Asparagine 154 carries N-linked (GlcNAc...) asparagine glycosylation. Serine 171 is lipidated: GPI-anchor amidated serine. Positions 172–194 (SGFALYYSNNLLLTGFCSLVMML) are cleaved as a propeptide — removed in mature form.

Contains two additional disulfide bonds. Expressed in the shoot apical region and in young leaves but also detected in the laminar and vasculature of mature leaves.

It localises to the cell membrane. Its subcellular location is the cell junction. It is found in the plasmodesma. In terms of biological role, able to bind (1-&gt;3)-beta-D-glucans (laminarin). The polypeptide is PLASMODESMATA CALLOSE-BINDING PROTEIN 2 (PDCB2) (Arabidopsis thaliana (Mouse-ear cress)).